Here is a 394-residue protein sequence, read N- to C-terminus: S-adenosylmethionine synthase (394 aa).

Residue His18 coordinates ATP. Residue Asp20 coordinates Mg(2+). Glu46 is a K(+) binding site. Residues Glu59 and Gln104 each coordinate L-methionine. Residues 104 to 114 (QSPDIAQGVDA) form a flexible loop region. ATP is bound by residues 174-176 (DCK), 240-241 (KF), Asp249, 255-256 (RK), Ala272, and Lys276. Asp249 lines the L-methionine pocket. Lys280 is an L-methionine binding site.

Belongs to the AdoMet synthase family. In terms of assembly, homotetramer; dimer of dimers. Mg(2+) serves as cofactor. K(+) is required as a cofactor.

Its subcellular location is the cytoplasm. The catalysed reaction is L-methionine + ATP + H2O = S-adenosyl-L-methionine + phosphate + diphosphate. It participates in amino-acid biosynthesis; S-adenosyl-L-methionine biosynthesis; S-adenosyl-L-methionine from L-methionine: step 1/1. Its function is as follows. Catalyzes the formation of S-adenosylmethionine (AdoMet) from methionine and ATP. The overall synthetic reaction is composed of two sequential steps, AdoMet formation and the subsequent tripolyphosphate hydrolysis which occurs prior to release of AdoMet from the enzyme. The protein is S-adenosylmethionine synthase of Akkermansia muciniphila (strain ATCC BAA-835 / DSM 22959 / JCM 33894 / BCRC 81048 / CCUG 64013 / CIP 107961 / Muc).